A 248-amino-acid chain; its full sequence is D-xylose 1-dehydrogenase (248 aa).

The NAD(+) site is built by Asp-42, Asp-68, Asn-91, Tyr-156, Lys-160, Val-189, and Thr-191. The Proton acceptor role is filled by Tyr-156.

This sequence belongs to the short-chain dehydrogenases/reductases (SDR) family.

It carries out the reaction D-xylose + NAD(+) = D-xylono-1,5-lactone + NADH + H(+). Functionally, involved in the degradation of D-xylose. Catalyzes the initial reaction in the xylose utilization pathway by oxydizing D-xylose into D-xylonolactone. Shows some activity with L-arabinose and D-lyxose, but D-xylose is clearly the best substrate. Has no activity with D-ribose, D-glucose, D-galactose or D-mannose. This is D-xylose 1-dehydrogenase from Caulobacter vibrioides (strain ATCC 19089 / CIP 103742 / CB 15) (Caulobacter crescentus).